The sequence spans 245 residues: Phosphoribosyl isomerase A (245 aa).

The Proton acceptor role is filled by aspartate 11. Catalysis depends on aspartate 130, which acts as the Proton donor.

It belongs to the HisA/HisF family.

The protein resides in the cytoplasm. The catalysed reaction is 1-(5-phospho-beta-D-ribosyl)-5-[(5-phospho-beta-D-ribosylamino)methylideneamino]imidazole-4-carboxamide = 5-[(5-phospho-1-deoxy-D-ribulos-1-ylimino)methylamino]-1-(5-phospho-beta-D-ribosyl)imidazole-4-carboxamide. It carries out the reaction N-(5-phospho-beta-D-ribosyl)anthranilate = 1-(2-carboxyphenylamino)-1-deoxy-D-ribulose 5-phosphate. Its pathway is amino-acid biosynthesis; L-histidine biosynthesis; L-histidine from 5-phospho-alpha-D-ribose 1-diphosphate: step 4/9. It participates in amino-acid biosynthesis; L-tryptophan biosynthesis; L-tryptophan from chorismate: step 3/5. Functionally, involved in both the histidine and tryptophan biosynthetic pathways. In Mycobacterium bovis (strain ATCC BAA-935 / AF2122/97), this protein is Phosphoribosyl isomerase A (priA).